A 323-amino-acid chain; its full sequence is tRNA dimethylallyltransferase (323 aa).

12–19 contacts ATP; sequence GPTAAGKT. Residue 14–19 coordinates substrate; it reads TAAGKT. Interaction with substrate tRNA regions lie at residues 37–40 and 161–165; these read DSAL and QRLIR.

The protein belongs to the IPP transferase family. As to quaternary structure, monomer. The cofactor is Mg(2+).

It carries out the reaction adenosine(37) in tRNA + dimethylallyl diphosphate = N(6)-dimethylallyladenosine(37) in tRNA + diphosphate. Catalyzes the transfer of a dimethylallyl group onto the adenine at position 37 in tRNAs that read codons beginning with uridine, leading to the formation of N6-(dimethylallyl)adenosine (i(6)A). This Pseudomonas putida (strain W619) protein is tRNA dimethylallyltransferase.